The sequence spans 273 residues: Proteasome subunit beta type-10 (273 aa).

M1 is subject to N-acetylmethionine. Residues 1–39 (MLKQAVEPTGGFSFENCQRNASLEHVLPGLRVPHARKTG) constitute a propeptide, removed in mature form. T40 (nucleophile) is an active-site residue.

This sequence belongs to the peptidase T1B family. As to quaternary structure, the 26S proteasome consists of a 20S proteasome core and two 19S regulatory subunits. The 20S proteasome core is composed of 28 subunits that are arranged in four stacked rings, resulting in a barrel-shaped structure. The two end rings are each formed by seven alpha subunits, and the two central rings are each formed by seven beta subunits. The catalytic chamber with the active sites is on the inside of the barrel. Component of the immunoproteasome, where it displaces the equivalent housekeeping subunit PSMB7. Component of the spermatoproteasome, a form of the proteasome specifically found in testis. In terms of processing, autocleaved. The resulting N-terminal Thr residue of the mature subunit is responsible for the nucleophile proteolytic activity. Detected in liver (at protein level).

It localises to the cytoplasm. The protein resides in the nucleus. It catalyses the reaction Cleavage of peptide bonds with very broad specificity.. Functionally, the proteasome is a multicatalytic proteinase complex which is characterized by its ability to cleave peptides with Arg, Phe, Tyr, Leu, and Glu adjacent to the leaving group at neutral or slightly basic pH. The proteasome has an ATP-dependent proteolytic activity. This subunit is involved in antigen processing to generate class I binding peptides. Plays a role in determining the T-cell repertoire for an antiviral T-cell response. The sequence is that of Proteasome subunit beta type-10 (Psmb10) from Mus musculus (Mouse).